The chain runs to 227 residues: GTP:AMP phosphotransferase AK3, mitochondrial (227 aa).

Residues Gly17, Gly19, Lys20, Gly21, and Thr22 each contribute to the GTP site. An N6-succinyllysine modification is found at Lys20. The residue at position 34 (Lys34) is an N6-acetyllysine. At Ser37 the chain carries Phosphoserine. The segment at 37–66 is NMP; that stretch reads SSGDLLRDNMLRGTEIGVLAKAFIDQGKLI. AMP is bound by residues Ser38 and Arg43. Lys57 carries the post-translational modification N6-succinyllysine. Lys64 contributes to the AMP binding site. An N6-acetyllysine; alternate mark is found at Lys64 and Lys80. Residues Lys64 and Lys80 each carry the N6-succinyllysine; alternate modification. Residues Gly91, Arg94, and Gln98 each coordinate AMP. The interval 127-164 is LID; it reads ARWIHPASGRVYNIEFNPPKTVGIDDLTGEPLIQREDD. Positions 128, 138, 139, 161, and 172 each coordinate GTP. Residues Lys174 and Lys189 each carry the N6-acetyllysine; alternate modification. N6-succinyllysine; alternate occurs at positions 174 and 189. A GTP-binding site is contributed by Thr201. The residue at position 203 (Lys203) is an N6-acetyllysine.

It belongs to the adenylate kinase family. AK3 subfamily. As to quaternary structure, monomer. In terms of tissue distribution, highly expressed in heart, skeletal muscle and liver, moderately expressed in pancreas and kidney, and weakly expressed in placenta, brain and lung.

The protein localises to the mitochondrion matrix. The enzyme catalyses a ribonucleoside 5'-triphosphate + AMP = a ribonucleoside 5'-diphosphate + ADP. It carries out the reaction GTP + AMP = GDP + ADP. It catalyses the reaction ITP + AMP = IDP + ADP. With respect to regulation, inhibited by ATP. In terms of biological role, mitochondrial adenylate kinase with a specific GTP:AMP phosphotransferase activity. Could also use ITP as phosphate donor. Its physiological function is to recycle GTP into GDP which is necessary for the TCA cycle in the mitochondrial matrix. This Homo sapiens (Human) protein is GTP:AMP phosphotransferase AK3, mitochondrial.